Consider the following 917-residue polypeptide: Hexokinase-2 (917 aa).

Residue Met1 is modified to N-acetylmethionine. The mitochondrial-binding peptide (MBP) stretch occupies residues 1-16 (MIASHLLAYFFTELNH). 2 Hexokinase domains span residues 16-458 (HDQV…MVTA) and 464-906 (AYQH…LITA). Residues Arg30 and 84–89 (DLGGTN) each bind ATP. Positions 73 to 207 (DGTEHGEFLA…DFDIDIVAMV (135 aa)) are hexokinase small subdomain 1. 84–88 (DLGGT) is a D-glucose 6-phosphate binding site. Residues 155–156 (SF), 172–173 (TK), 208–209 (ND), Asn235, Glu260, and 291–294 (QLFE) each bind D-glucose. Residues 208–447 (NDTVATMMTC…CDIRFLCSED (240 aa)) are hexokinase large subdomain 1. Asp209 contributes to the D-glucose 6-phosphate binding site. Position 413-415 (413-415 (DGS)) interacts with D-glucose 6-phosphate. Residue 425-426 (KR) participates in ATP binding. Residues Ser449 and 532–536 (DLGGT) each bind D-glucose 6-phosphate. Residues 521–655 (DGTEKGDFLA…EFDLDVVAVV (135 aa)) are hexokinase small subdomain 2. 532 to 537 (DLGGTN) lines the ATP pocket. D-glucose-binding positions include 603–604 (SF), 620–621 (TK), and 656–657 (ND). Positions 656-895 (NDTVGTMMTC…CDVSFLESED (240 aa)) are hexokinase large subdomain 2. Residues Asp657 and Thr680 each contribute to the D-glucose 6-phosphate site. Thr680 is a binding site for ATP. Residues 682 to 683 (SN), Glu708, and 739 to 742 (QRFE) each bind D-glucose. ATP-binding positions include 747–748 (GM), 784–788 (TKFLS), and 863–867 (TLYKL). D-glucose 6-phosphate contacts are provided by residues 861–863 (DGT) and Ser897.

It belongs to the hexokinase family. In terms of assembly, monomer. Interacts with TIGAR; the interaction increases hexokinase activity in a hypoxia- and HIF1A-dependent manner.

Its subcellular location is the mitochondrion outer membrane. The protein resides in the cytoplasm. The protein localises to the cytosol. It catalyses the reaction a D-hexose + ATP = a D-hexose 6-phosphate + ADP + H(+). It carries out the reaction D-fructose + ATP = D-fructose 6-phosphate + ADP + H(+). The enzyme catalyses D-glucose + ATP = D-glucose 6-phosphate + ADP + H(+). It participates in carbohydrate metabolism; hexose metabolism. The protein operates within carbohydrate degradation; glycolysis; D-glyceraldehyde 3-phosphate and glycerone phosphate from D-glucose: step 1/4. Its activity is regulated as follows. Hexokinase activity is specifically inhibited by 2,6-disubstituted glucosamines. Its function is as follows. Catalyzes the phosphorylation of hexose, such as D-glucose and D-fructose, to hexose 6-phosphate (D-glucose 6-phosphate and D-fructose 6-phosphate, respectively). Mediates the initial step of glycolysis by catalyzing phosphorylation of D-glucose to D-glucose 6-phosphate. Plays a key role in maintaining the integrity of the outer mitochondrial membrane by preventing the release of apoptogenic molecules from the intermembrane space and subsequent apoptosis. The polypeptide is Hexokinase-2 (Equus zebra (Mountain zebra)).